Here is a 1000-residue protein sequence, read N- to C-terminus: SEC23-interacting protein (1000 aa).

The interaction with SEC23A stretch occupies residues methionine 1–glutamate 367. The interval phenylalanine 133–proline 252 is disordered. Low complexity predominate over residues serine 154–tyrosine 167. Positions proline 207–proline 218 are enriched in pro residues. Over residues serine 235–proline 246 the composition is skewed to low complexity. The 64-residue stretch at lysine 644 to leucine 707 folds into the SAM domain. A disordered region spans residues alanine 716–lysine 748. 2 positions are modified to phosphoserine: serine 737 and serine 926. The region spanning leucine 779–arginine 989 is the DDHD domain.

Belongs to the PA-PLA1 family. As to quaternary structure, interacts with SEC23A. In terms of tissue distribution, ubiquitously expressed with stronger levels detected in heart, liver and skeletal muscle.

It is found in the cytoplasmic vesicle. The protein resides in the COPII-coated vesicle membrane. It localises to the endoplasmic reticulum. Functionally, plays a role in the organization of endoplasmic reticulum exit sites. Specifically binds to phosphatidylinositol 3-phosphate (PI(3)P), phosphatidylinositol 4-phosphate (PI(4)P) and phosphatidylinositol 5-phosphate (PI(5)P). The polypeptide is SEC23-interacting protein (SEC23IP) (Homo sapiens (Human)).